The primary structure comprises 502 residues: N-sulphoglucosamine sulphohydrolase (502 aa).

The first 20 residues, 1–20 (MSCPVPACCALLLVLGLCRA), serve as a signal peptide directing secretion. Ca(2+) is bound by residues D31 and D32. An N-linked (GlcNAc...) asparagine glycan is attached at N41. C70 provides a ligand contact to Ca(2+). C70 serves as the catalytic Nucleophile. C70 bears the 3-oxoalanine (Cys) mark. N-linked (GlcNAc...) asparagine glycans are attached at residues N142 and N151. C183 and C194 are disulfide-bonded. N264 carries an N-linked (GlcNAc...) asparagine glycan. Ca(2+) is bound by residues D273 and N274. A glycan (N-linked (GlcNAc...) asparagine) is linked at N413. C481 and C495 are joined by a disulfide.

Belongs to the sulfatase family. Requires Ca(2+) as cofactor. The conversion to 3-oxoalanine (also known as C-formylglycine, FGly), of a serine or cysteine residue in prokaryotes and of a cysteine residue in eukaryotes, is critical for catalytic activity.

It is found in the lysosome. It carries out the reaction N-sulfo-D-glucosamine + H2O = D-glucosamine + sulfate. Functionally, catalyzes a step in lysosomal heparan sulfate degradation. This is N-sulphoglucosamine sulphohydrolase (SGSH) from Homo sapiens (Human).